The sequence spans 770 residues: MEPREAAGKETMGSKKKNLTFLRSRLYMLERRKTDTVVDSSVSGDHSGSLRRSQSDRTEYNQKLQEKMTPQAECSSAETPTPEDEQQVGRMMAKRAKIIRELIQTERDYLTDLELCLREVVQPLRSKQIDRLDVEGLFSNIESVHQISAKLLSLLEEATTDVEPAMQVIGEVFLQIKGPLEDIYKIYCYHHDEAHSVLESYEKEEELKQHLSHCLQSLKNIYLQEGKPNLLDMGSLMIKPIQRVMKYPLLLCELRNSTPPSHPDYRALGEAFAAVKDINVNINELKRRKDLVLKYKKNEEEESLKDKLSKLNIHSISKKSKRVTNHLKILTRGESQVKDNTFNREEKLFRSLEKTVRLCVKNISSCLQHIEEATPFTLQSGAELREISYQDGEKNGTEPQDQASKPYQDFAARSQRLILNPLSALLSLFPGPQKLIQKRYDKLLDYNSSLPRSATTESDLAKREYEALNAQLVEELQAFNQAAKTILLNCLCSFVTLLRDLMQVALQAYSTVKTVPLPVLGISEIQSRVLEEVHSLTFVKENSATFIERKLSFEKKKPAQILPEVPHQTDAHRSKLLSTYGAEELYRAKRKCNATQEHDINLLEGELVAVLEQKDPLGSTSRWFVDTGCVKGYVYSSFLKPHNPGKGQKVDADNRFCDDDFENISLFVSCRPAGDRVSISDSSSSLSGSCGKFETNGADADNFQEVDEQIFYAVHAFQARSDHELSLQEYQRVHILRFCDLSGNKEWWLAEAQGQKGYVPANYLGKMTYA.

The segment at 33 to 88 (KTDTVVDSSVSGDHSGSLRRSQSDRTEYNQKLQEKMTPQAECSSAETPTPEDEQQV) is disordered. Thr-34 carries the phosphothreonine modification. The span at 37–47 (VVDSSVSGDHS) shows a compositional bias: low complexity. Over residues 53–66 (SQSDRTEYNQKLQE) the composition is skewed to basic and acidic residues. The DH domain maps to 94–285 (KRAKIIRELI…KDINVNINEL (192 aa)). One can recognise a BAR domain in the interval 327–542 (LKILTRGESQ…VHSLTFVKEN (216 aa)). SH3 domains are found at residues 581-644 (GAEE…PHNP) and 706-769 (VDEQ…KMTY).

Its function is as follows. May act as a guanine-nucleotide releasing factor. This chain is Rho guanine nucleotide exchange factor 38 (Arhgef38), found in Mus musculus (Mouse).